The sequence spans 79 residues: Conotoxin Leo-O4 (79 aa).

The N-terminal stretch at 1 to 22 is a signal peptide; it reads MKLTCMMLVAVLFLTAWTFVTA. Positions 23–51 are excised as a propeptide; the sequence is NVSRNGLENLFPEERHEMMNPNAAKLNNR. Intrachain disulfides connect Cys-53–Cys-70, Cys-60–Cys-74, and Cys-69–Cys-78.

This sequence belongs to the conotoxin O1 superfamily. Expressed by the venom duct.

It is found in the secreted. The polypeptide is Conotoxin Leo-O4 (Conus leopardus (Leopard cone)).